The following is a 28-amino-acid chain: Dermaseptin-SP1 (28 aa).

As to expression, expressed by the skin glands.

Its subcellular location is the secreted. In terms of biological role, probable antimicrobial peptide which stimulates insulin-release in glucose-responsive BRIN-BD 11 cells. The chain is Dermaseptin-SP1 from Agalychnis spurrelli (Gliding leaf frog).